Here is a 76-residue protein sequence, read N- to C-terminus: Acyl carrier protein (76 aa).

Residues 2 to 76 (SSIFDKVKAI…SAVEYIKENQ (75 aa)) enclose the Carrier domain. Position 36 is an O-(pantetheine 4'-phosphoryl)serine (Ser36).

Belongs to the acyl carrier protein (ACP) family. 4'-phosphopantetheine is transferred from CoA to a specific serine of apo-ACP by AcpS. This modification is essential for activity because fatty acids are bound in thioester linkage to the sulfhydryl of the prosthetic group.

It localises to the cytoplasm. It functions in the pathway lipid metabolism; fatty acid biosynthesis. In terms of biological role, carrier of the growing fatty acid chain in fatty acid biosynthesis. The polypeptide is Acyl carrier protein (Heliobacterium modesticaldum (strain ATCC 51547 / Ice1)).